We begin with the raw amino-acid sequence, 617 residues long: Solute carrier family 2, facilitated glucose transporter member 12 (617 aa).

The segment at 1–29 (MVPVENTEGPSLLNQKGTAVETEGSGSRH) is disordered. At 1 to 44 (MVPVENTEGPSLLNQKGTAVETEGSGSRHPPWARGCGMFTFLSS) the chain is on the cytoplasmic side. The span at 8 to 17 (EGPSLLNQKG) shows a compositional bias: polar residues. Residues 45–65 (VTAAVSGLLVGYELGIISGAL) traverse the membrane as a helical segment. At 66-80 (LQIKTLLALSCHEQE) the chain is on the extracellular side. The chain crosses the membrane as a helical span at residues 81-101 (MVVSSLVIGALLASLTGGVLI). The Cytoplasmic segment spans residues 102–115 (DRYGRRTAIILSSC). A helical transmembrane segment spans residues 116-136 (LLGLGSLVLILSLSYTVLIVG). Arg-137 is a topological domain (extracellular). A helical transmembrane segment spans residues 138 to 158 (IAIGVSISLSSIATCVYIAEI). Residues 159-172 (APQHRRGLLVSLNE) are Cytoplasmic-facing. A helical transmembrane segment spans residues 173-193 (LMIVIGILSAYISNYAFANVF). The Extracellular portion of the chain corresponds to 194 to 197 (HGWK). Residues 198-218 (YMFGLVIPLGVLQAIAMYFLP) traverse the membrane as a helical segment. The Cytoplasmic segment spans residues 219–278 (PSPRFLVMKGQEGAASKVLGRLRALSDTTEELTVIKSSLKDEYQYSFWDLFRSKDNMRTR). Residues 279–299 (IMIGLTLVFFVQITGQPNILF) form a helical membrane-spanning segment. Residues 300–317 (YASTVLKSVGFQSNEAAS) are Extracellular-facing. The helical transmembrane segment at 318–338 (LASTGVGVVKVISTIPATLLV) threads the bilayer. Topologically, residues 339 to 345 (DHVGSKT) are cytoplasmic. The helical transmembrane segment at 346 to 366 (FLCIGSSVMAASLVTMGIVNL) threads the bilayer. Over 367-466 (NIHMNFTHIC…PAFLKWLSLA (100 aa)) the chain is Extracellular. N-linked (GlcNAc...) asparagine glycans are attached at residues Asn-371, Asn-383, Asn-396, and Asn-401. The chain crosses the membrane as a helical span at residues 467-487 (SLLVYVAAFSIGLGPMPWLVL). Over 488-498 (SEIFPGGIRGR) the chain is Cytoplasmic. A helical membrane pass occupies residues 499-519 (AMALTSSMNWGINLLISLTFL). The Extracellular segment spans residues 520-528 (TVTDLIGLP). A helical membrane pass occupies residues 529–549 (WVCFIYTIMSLASLLFVVMFI). Residues 550–617 (PETKGCSLEQ…GQSRQLSPET (68 aa)) are Cytoplasmic-facing.

It belongs to the major facilitator superfamily. Sugar transporter (TC 2.A.1.1) family. Glucose transporter subfamily. In terms of tissue distribution, predominantly expressed in skeletal muscle, heart and prostate, with lower levels in brain, placenta and kidney.

Its subcellular location is the cell membrane. It is found in the endomembrane system. The protein resides in the cytoplasm. The protein localises to the perinuclear region. It carries out the reaction D-glucose(out) = D-glucose(in). Functionally, insulin-independent facilitative glucose transporter. This Homo sapiens (Human) protein is Solute carrier family 2, facilitated glucose transporter member 12.